Reading from the N-terminus, the 357-residue chain is tRNA pseudouridine synthase D (357 aa).

The active-site Nucleophile is the Asp-76. Positions 151–331 constitute a TRUD domain; sequence GMPNYFGYQR…DGRYKDEEAQ (181 aa).

This sequence belongs to the pseudouridine synthase TruD family.

The catalysed reaction is uridine(13) in tRNA = pseudouridine(13) in tRNA. Its function is as follows. Responsible for synthesis of pseudouridine from uracil-13 in transfer RNAs. In Sulfurimonas denitrificans (strain ATCC 33889 / DSM 1251) (Thiomicrospira denitrificans (strain ATCC 33889 / DSM 1251)), this protein is tRNA pseudouridine synthase D.